The sequence spans 424 residues: UPF0229 protein PputGB1_0427 (424 aa).

A disordered region spans residues 81–107 (EFTAGEHIPRPQGGGGGGGGRGKAGNS). The span at 92-107 (QGGGGGGGGRGKAGNS) shows a compositional bias: gly residues.

This sequence belongs to the UPF0229 family.

The protein is UPF0229 protein PputGB1_0427 of Pseudomonas putida (strain GB-1).